The primary structure comprises 1479 residues: C-type mannose receptor 2 (1479 aa).

The first 30 residues, Met-1–Pro-30, serve as a signal peptide directing secretion. Residues Gly-31–Ala-1414 lie on the Extracellular side of the membrane. A Ricin B-type lectin domain is found at Pro-41 to Leu-167. An intrachain disulfide couples Cys-54 to Cys-68. N-linked (GlcNAc...) (complex) asparagine glycosylation is present at Asn-69. The cysteines at positions 93 and 112 are disulfide-linked. An N-linked (GlcNAc...) asparagine glycan is attached at Asn-140. The Fibronectin type-II domain occupies Ser-182–Ile-230. 4 cysteine pairs are disulfide-bonded: Cys-187–Cys-213, Cys-201–Cys-228, Cys-266–Cys-359, and Cys-335–Cys-351. One can recognise a C-type lectin 1 domain in the interval Leu-244–Lys-360. N-linked (GlcNAc...) asparagine glycosylation occurs at Asn-364. 4 C-type lectin domains span residues Phe-389 to Lys-505, His-528 to Cys-644, Lys-678 to Lys-809, and Phe-832 to Lys-951. Cystine bridges form between Cys-410–Cys-504 and Cys-481–Cys-496. N-linked (GlcNAc...) asparagine glycosylation occurs at Asn-588. 5 disulfide bridges follow: Cys-618–Cys-635, Cys-704–Cys-808, Cys-785–Cys-800, Cys-853–Cys-950, and Cys-927–Cys-942. N-linked (GlcNAc...) asparagine glycosylation is found at Asn-954 and Asn-1029. 3 consecutive C-type lectin domains span residues Phe-979–Cys-1107, Tyr-1132–Cys-1243, and Phe-1273–Cys-1393. Cys-1078 and Cys-1098 are disulfide-bonded. Lys-1142 is covalently cross-linked (Glycyl lysine isopeptide (Lys-Gly) (interchain with G-Cter in SUMO1)). Cys-1220 and Cys-1234 are joined by a disulfide. The N-linked (GlcNAc...) asparagine glycan is linked to Asn-1350. A disulfide bridge connects residues Cys-1369 and Cys-1384. Residues Leu-1415–Leu-1435 form a helical membrane-spanning segment. Residues Tyr-1436–Glu-1479 are Cytoplasmic-facing. Positions Ala-1450–Glu-1479 are disordered.

As to quaternary structure, interacts with C-terminal region of type I collagen/COL1A1. Interacts directly with PLAUR/UPAR and PLAU/pro-UPA to form a tri-molecular complex. Interacts with collagen V. In terms of processing, N-glycosylated. As to expression, ubiquitous with low expression in brain, placenta, lung, kidney, pancreas, spleen, thymus and colon. Expressed in endothelial cells, fibroblasts and macrophages. Highly expressed in fetal lung and kidney.

It is found in the membrane. Its function is as follows. May play a role as endocytotic lectin receptor displaying calcium-dependent lectin activity. Internalizes glycosylated ligands from the extracellular space for release in an endosomal compartment via clathrin-mediated endocytosis. May be involved in plasminogen activation system controlling the extracellular level of PLAUR/PLAU, and thus may regulate protease activity at the cell surface. May contribute to cellular uptake, remodeling and degradation of extracellular collagen matrices. May play a role during cancer progression as well as in other chronic tissue destructive diseases acting on collagen turnover. May participate in remodeling of extracellular matrix cooperating with the matrix metalloproteinases (MMPs). In Homo sapiens (Human), this protein is C-type mannose receptor 2 (MRC2).